A 408-amino-acid polypeptide reads, in one-letter code: Lysosomal phospholipase A and acyltransferase (408 aa).

An N-terminal signal peptide occupies residues 1 to 31; the sequence is MGLRRGPCPAALLPGGFLFLLLLADPALLAG. Residue D42 participates in substrate binding. C61 and C85 are oxidised to a cystine. N95 carries an N-linked (GlcNAc...) asparagine glycan. S194 functions as the Acyl-ester intermediate in the catalytic mechanism. S194 serves as a coordination point for Zn(2+). Substrate is bound at residue M195. N269 and N285 each carry an N-linked (GlcNAc...) asparagine glycan. Zn(2+)-binding residues include D336 and C351. Active-site charge relay system residues include D356 and H388. H388 lines the Zn(2+) pocket. A glycan (N-linked (GlcNAc...) asparagine) is linked at N394.

It belongs to the AB hydrolase superfamily. Lipase family. N-glycosylated. N-glycosylation is important for maturation of the enzyme and normal subcellular location.

Its subcellular location is the secreted. It localises to the lysosome. The protein localises to the membrane. It carries out the reaction a 1,2-diacyl-sn-glycero-3-phosphocholine + H2O = a 2-acyl-sn-glycero-3-phosphocholine + a fatty acid + H(+). The catalysed reaction is 1-hexadecanoyl-2-(9Z-octadecenoyl)-sn-glycero-3-phosphocholine + H2O = 2-(9Z-octadecenoyl)-sn-glycero-3-phosphocholine + hexadecanoate + H(+). The enzyme catalyses 1,2-di-(9Z-octadecenoyl)-sn-glycero-3-phosphocholine + H2O = 2-(9Z-octadecenoyl)-sn-glycero-3-phosphocholine + (9Z)-octadecenoate + H(+). It catalyses the reaction 1-hexadecanoyl-2-glutaroyl-sn-glycero-3-phosphocholine + H2O = 2-glutaroyl-sn-glycero-3-phosphocholine + hexadecanoate + H(+). It carries out the reaction 1-hexadecanoyl-2-nonadioyl-sn-glycero-3-phosphocholine + H2O = 2-nonadioyl-sn-glycero-3-phosphocholine + hexadecanoate + H(+). The catalysed reaction is 1-hexadecanoyl-2-(5-oxopentanoyl)-sn-glycero-3-phosphocholine + H2O = 2-(5-oxopentanoyl)-sn-glycero-3-phosphocholine + hexadecanoate + H(+). The enzyme catalyses 1-hexadecanoyl-2-(9-oxononanoyl)-sn-glycero-3-phosphocholine + H2O = 2-(9-oxononanoyl)-sn-glycero-3-phosphocholine + hexadecanoate + H(+). It catalyses the reaction 1,2-dihexadecanoyl-sn-glycero-3-phosphocholine + H2O = 2-hexadecanoyl-sn-glycero-3-phosphocholine + hexadecanoate + H(+). It carries out the reaction a 1,2-diacyl-sn-glycero-3-phosphocholine + H2O = a 1-acyl-sn-glycero-3-phosphocholine + a fatty acid + H(+). The catalysed reaction is 1-hexadecanoyl-2-(9Z-octadecenoyl)-sn-glycero-3-phosphocholine + H2O = 1-hexadecanoyl-sn-glycero-3-phosphocholine + (9Z)-octadecenoate + H(+). The enzyme catalyses 1,2-di-(9Z-octadecenoyl)-sn-glycero-3-phosphocholine + H2O = 1-(9Z-octadecenoyl)-sn-glycero-3-phosphocholine + (9Z)-octadecenoate + H(+). It catalyses the reaction 1,2-dihexadecanoyl-sn-glycero-3-phosphocholine + H2O = 1-hexadecanoyl-sn-glycero-3-phosphocholine + hexadecanoate + H(+). It carries out the reaction a 1-acyl-sn-glycero-3-phosphocholine + H2O = sn-glycerol 3-phosphocholine + a fatty acid + H(+). The catalysed reaction is 1-hexadecanoyl-sn-glycero-3-phosphocholine + H2O = sn-glycerol 3-phosphocholine + hexadecanoate + H(+). The enzyme catalyses N-(acetyl)-sphing-4-enine + a 1,2-diacyl-sn-glycero-3-phosphoethanolamine = 1-O-acyl-N-(acetyl)-sphing-4-enine + a 2-acyl-sn-glycero-3-phosphoethanolamine. It catalyses the reaction 1-hexadecanoyl-2-(9Z-octadecenoyl)-sn-glycero-3-phosphoethanolamine + N-(acetyl)-sphing-4-enine = 2-(9Z-octadecenoyl)-sn-glycero-3-phosphoethanolamine + 1-hexadecanoyl-N-(acetyl)-sphing-4-enine. It carries out the reaction 1-hexadecanoyl-2-(9Z,12Z-octadecadienoyl)-sn-glycero-3-phosphoethanolamine + N-(acetyl)-sphing-4-enine = 2-(9Z,12Z)-octadecadienoyl-sn-glycero-3-phosphoethanolamine + 1-hexadecanoyl-N-(acetyl)-sphing-4-enine. The catalysed reaction is 1-hexadecanoyl-2-(5Z,8Z,11Z,14Z-eicosatetraenoyl)-sn-glycero-3-phosphoethanolamine + N-(acetyl)-sphing-4-enine = 2-(5Z,8Z,11Z,14Z)-eicosatetraenoyl-sn-glycero-3-phosphoethanolamine + 1-hexadecanoyl-N-(acetyl)-sphing-4-enine. The enzyme catalyses N-(acetyl)-sphing-4-enine + a 1,2-diacyl-sn-glycero-3-phosphoethanolamine = 1-O-acyl-N-(acetyl)-sphing-4-enine + a 1-acyl-sn-glycero-3-phosphoethanolamine. It catalyses the reaction 1-hexadecanoyl-2-(9Z-octadecenoyl)-sn-glycero-3-phosphoethanolamine + N-(acetyl)-sphing-4-enine = 1-(9Z-octadecenoyl)-N-(acetyl)-sphing-4-enine + 1-hexadecanoyl-sn-glycero-3-phosphoethanolamine. It carries out the reaction 1-hexadecanoyl-2-(9Z,12Z-octadecadienoyl)-sn-glycero-3-phosphoethanolamine + N-(acetyl)-sphing-4-enine = 1-(9Z,12Z-octadecadienoyl)-N-acetylsphing-4-enine + 1-hexadecanoyl-sn-glycero-3-phosphoethanolamine. The catalysed reaction is 1-hexadecanoyl-2-(5Z,8Z,11Z,14Z-eicosatetraenoyl)-sn-glycero-3-phosphoethanolamine + N-(acetyl)-sphing-4-enine = 1-(5Z,8Z,11Z,14Z)-eicosatetraenoyl-N-(acetyl)-sphing-4-enine + 1-hexadecanoyl-sn-glycero-3-phosphoethanolamine. The enzyme catalyses N-(acetyl)-sphing-4-enine + a 1,2-diacyl-sn-glycero-3-phosphocholine = 1-O-acyl-N-(acetyl)-sphing-4-enine + a 2-acyl-sn-glycero-3-phosphocholine. It catalyses the reaction 1-hexadecanoyl-2-(9Z-octadecenoyl)-sn-glycero-3-phosphocholine + N-(acetyl)-sphing-4-enine = 1-hexadecanoyl-N-(acetyl)-sphing-4-enine + 2-(9Z-octadecenoyl)-sn-glycero-3-phosphocholine. It carries out the reaction 1-hexadecanoyl-2-(9Z,12Z-octadecadienoyl)-sn-glycero-3-phosphocholine + N-(acetyl)-sphing-4-enine = 2-(9Z,12Z-octadecadienoyl)-sn-glycero-3-phosphocholine + 1-hexadecanoyl-N-(acetyl)-sphing-4-enine. The catalysed reaction is 1-hexadecanoyl-2-(5Z,8Z,11Z,14Z-eicosatetraenoyl)-sn-glycero-3-phosphocholine + N-(acetyl)-sphing-4-enine = 1-hexadecanoyl-N-(acetyl)-sphing-4-enine + 2-(5Z,8Z,11Z,14Z)-eicosatetraenoyl-sn-glycero-3-phosphocholine. The enzyme catalyses 1-hexadecanoyl-2-(4Z,7Z,10Z,13Z,16Z,19Z-docosahexaenoyl)-sn-glycero-3-phosphocholine + N-(acetyl)-sphing-4-enine = 2-(4Z,7Z,10Z,13Z,16Z,19Z-docosahexaenoyl)-sn-glycero-3-phosphocholine + 1-hexadecanoyl-N-(acetyl)-sphing-4-enine. It catalyses the reaction 1-hexadecanoyl-2-nonadioyl-sn-glycero-3-phosphocholine + N-(acetyl)-sphing-4-enine = 2-nonadioyl-sn-glycero-3-phosphocholine + 1-hexadecanoyl-N-(acetyl)-sphing-4-enine. It carries out the reaction 1-octadecanoyl-2-(9Z-octadecenoyl)-sn-glycero-3-phosphocholine + N-(acetyl)-sphing-4-enine = 1-octadecanoyl-N-(acetyl)-sphing-4-enine + 2-(9Z-octadecenoyl)-sn-glycero-3-phosphocholine. The catalysed reaction is 1-(9Z)-octadecenoyl-2-octadecanoyl-sn-glycero-3-phosphocholine + N-(acetyl)-sphing-4-enine = 2-octadecanoyl-sn-glycero-3-phosphocholine + 1-(9Z-octadecenoyl)-N-(acetyl)-sphing-4-enine. The enzyme catalyses 1-octadecanoyl-2-(5Z,8Z,11Z,14Z-eicosatetraenoyl)-sn-glycero-3-phosphocholine + N-(acetyl)-sphing-4-enine = 1-octadecanoyl-N-(acetyl)-sphing-4-enine + 2-(5Z,8Z,11Z,14Z)-eicosatetraenoyl-sn-glycero-3-phosphocholine. It catalyses the reaction 1-(9Z-octadecenoyl)-2-hexadecanoyl-sn-glycero-3-phosphocholine + N-(acetyl)-sphing-4-enine = 1-(9Z-octadecenoyl)-N-(acetyl)-sphing-4-enine + 2-hexadecanoyl-sn-glycero-3-phosphocholine. It carries out the reaction N-(acetyl)-sphing-4-enine + a 1,2-diacyl-sn-glycero-3-phosphocholine = 1-O-acyl-N-(acetyl)-sphing-4-enine + a 1-acyl-sn-glycero-3-phosphocholine. The catalysed reaction is 1-hexadecanoyl-2-(9Z-octadecenoyl)-sn-glycero-3-phosphocholine + N-(acetyl)-sphing-4-enine = 1-(9Z-octadecenoyl)-N-(acetyl)-sphing-4-enine + 1-hexadecanoyl-sn-glycero-3-phosphocholine. The enzyme catalyses 1-hexadecanoyl-2-(9Z,12Z-octadecadienoyl)-sn-glycero-3-phosphocholine + N-(acetyl)-sphing-4-enine = 1-(9Z,12Z-octadecadienoyl)-N-acetylsphing-4-enine + 1-hexadecanoyl-sn-glycero-3-phosphocholine. It catalyses the reaction 1-hexadecanoyl-2-(5Z,8Z,11Z,14Z-eicosatetraenoyl)-sn-glycero-3-phosphocholine + N-(acetyl)-sphing-4-enine = 1-(5Z,8Z,11Z,14Z)-eicosatetraenoyl-N-(acetyl)-sphing-4-enine + 1-hexadecanoyl-sn-glycero-3-phosphocholine. It carries out the reaction 1-hexadecanoyl-2-(4Z,7Z,10Z,13Z,16Z,19Z-docosahexaenoyl)-sn-glycero-3-phosphocholine + N-(acetyl)-sphing-4-enine = 1-(4Z,7Z,10Z,13Z,16Z,19Z-docosahexaenoyl)-N-(acetyl)-sphing-4-enine + 1-hexadecanoyl-sn-glycero-3-phosphocholine. The catalysed reaction is 1-octadecanoyl-2-(9Z-octadecenoyl)-sn-glycero-3-phosphocholine + N-(acetyl)-sphing-4-enine = 1-(9Z-octadecenoyl)-N-(acetyl)-sphing-4-enine + 1-octadecanoyl-sn-glycero-3-phosphocholine. The enzyme catalyses 1-octadecanoyl-2-(9Z,12Z)-octadecadienoyl-sn-glycero-3-phosphocholine + N-(acetyl)-sphing-4-enine = 1-(9Z,12Z-octadecadienoyl)-N-acetylsphing-4-enine + 1-octadecanoyl-sn-glycero-3-phosphocholine. It catalyses the reaction 1-(9Z-octadecenoyl)-2-hexadecanoyl-sn-glycero-3-phosphocholine + N-(acetyl)-sphing-4-enine = 1-hexadecanoyl-N-(acetyl)-sphing-4-enine + 1-(9Z-octadecenoyl)-sn-glycero-3-phosphocholine. It carries out the reaction 1-(9Z)-octadecenoyl-2-octadecanoyl-sn-glycero-3-phosphocholine + N-(acetyl)-sphing-4-enine = 1-octadecanoyl-N-(acetyl)-sphing-4-enine + 1-(9Z-octadecenoyl)-sn-glycero-3-phosphocholine. The catalysed reaction is 1,2-di-(9Z-octadecenoyl)-sn-glycero-3-phosphocholine + N-(acetyl)-sphing-4-enine = 1-(9Z-octadecenoyl)-N-(acetyl)-sphing-4-enine + 1-(9Z-octadecenoyl)-sn-glycero-3-phosphocholine. The enzyme catalyses 1-octadecanoyl-2-(5Z,8Z,11Z,14Z-eicosatetraenoyl)-sn-glycero-3-phosphocholine + N-(acetyl)-sphing-4-enine = 1-(5Z,8Z,11Z,14Z)-eicosatetraenoyl-N-(acetyl)-sphing-4-enine + 1-octadecanoyl-sn-glycero-3-phosphocholine. It catalyses the reaction a 1,2-diacyl-sn-glycero-3-phospho-L-serine + N-(acetyl)-sphing-4-enine = a 2-acyl-sn-glycero-3-phospho-L-serine + 1-O-acyl-N-(acetyl)-sphing-4-enine. It carries out the reaction 1-octadecanoyl-2-(9Z-octadecenoyl)-sn-glycero-3-phospho-L-serine + N-(acetyl)-sphing-4-enine = 2-(9Z-octadecenoyl)-sn-glycero-3-phospho-L-serine + 1-octadecanoyl-N-(acetyl)-sphing-4-enine. The catalysed reaction is a 1,2-diacyl-sn-glycero-3-phospho-L-serine + N-(acetyl)-sphing-4-enine = 1-O-acyl-N-(acetyl)-sphing-4-enine + a 1-acyl-sn-glycero-3-phospho-L-serine. The enzyme catalyses 1-octadecanoyl-2-(9Z-octadecenoyl)-sn-glycero-3-phospho-L-serine + N-(acetyl)-sphing-4-enine = 1-octadecanoyl-sn-glycero-3-phosphoserine + 1-(9Z-octadecenoyl)-N-(acetyl)-sphing-4-enine. It catalyses the reaction a 1,2-diacyl-sn-glycero-3-phospho-(1'-sn-glycerol) + N-(acetyl)-sphing-4-enine = 2-acyl-sn-glycero-3-phospho-(1'-sn-glycerol) + 1-O-acyl-N-(acetyl)-sphing-4-enine. It carries out the reaction 1-octadecanoyl-2-(9Z-octadecenoyl)-sn-glycero-3-phospho-(1'-sn-glycerol) + N-(acetyl)-sphing-4-enine = 2-(9Z-octadecenoyl)-sn-glycero-3-phospho-(1'-sn-glycerol) + 1-octadecanoyl-N-(acetyl)-sphing-4-enine. The catalysed reaction is a 1,2-diacyl-sn-glycero-3-phospho-(1'-sn-glycerol) + N-(acetyl)-sphing-4-enine = 1-O-acyl-N-(acetyl)-sphing-4-enine + 1-acyl-sn-glycero-3-phospho-(1'-sn-glycerol). The enzyme catalyses 1-octadecanoyl-2-(9Z-octadecenoyl)-sn-glycero-3-phospho-(1'-sn-glycerol) + N-(acetyl)-sphing-4-enine = 1-octadecanoyl-sn-glycero-3-phospho-(1'-sn-glycerol) + 1-(9Z-octadecenoyl)-N-(acetyl)-sphing-4-enine. It catalyses the reaction an N-acylethanolamine + a 1,2-diacyl-sn-glycero-3-phosphocholine = 2-(acylamino)ethyl fatty acid + a 2-acyl-sn-glycero-3-phosphocholine. It carries out the reaction an N-acylethanolamine + a 1,2-diacyl-sn-glycero-3-phosphocholine = 2-(acylamino)ethyl fatty acid + a 1-acyl-sn-glycero-3-phosphocholine. The catalysed reaction is N-(5Z,8Z,11Z,14Z-eicosatetraenoyl)-ethanolamine + 1,2-di-(9Z-octadecenoyl)-sn-glycero-3-phosphocholine = 2-[(5Z,8Z,11Z,14Z)-eicosatetraenoylamino]ethyl (9Z)-octadecenoate + (9Z-octadecenoyl)-sn-glycero-3-phosphocholine. The enzyme catalyses N-(9Z-octadecenoyl) ethanolamine + 1,2-di-(9Z-octadecenoyl)-sn-glycero-3-phosphocholine = 2-[(9Z)-octadecenoylamino]ethyl (9Z)-octadecenoate + (9Z-octadecenoyl)-sn-glycero-3-phosphocholine. It catalyses the reaction a 3-acyl-sn-glycerol + a 1,2-diacyl-sn-glycero-3-phosphocholine = a 1,3-diacylglycerol + a 1-acyl-sn-glycero-3-phosphocholine. It carries out the reaction a 3-acyl-sn-glycerol + a 1,2-diacyl-sn-glycero-3-phosphocholine = a 1,3-diacylglycerol + a 2-acyl-sn-glycero-3-phosphocholine. The catalysed reaction is 3-(9Z-octadecenoyl)-sn-glycerol + 1,2-di-(9Z-octadecenoyl)-sn-glycero-3-phosphocholine = 1,3-di-(9Z-octadecenoyl)-glycerol + (9Z-octadecenoyl)-sn-glycero-3-phosphocholine. The enzyme catalyses 3-hexadecanoyl-sn-glycerol + 1,2-di-(9Z-octadecenoyl)-sn-glycero-3-phosphocholine = 1-(9Z)-octadecenoyl-3-hexadecanoyl-sn-glycerol + (9Z-octadecenoyl)-sn-glycero-3-phosphocholine. It catalyses the reaction a 1-acyl-sn-glycerol + a 1,2-diacyl-sn-glycero-3-phosphocholine = a 1,3-diacylglycerol + a 2-acyl-sn-glycero-3-phosphocholine. It carries out the reaction a 1-acyl-sn-glycerol + a 1,2-diacyl-sn-glycero-3-phosphocholine = a 1,3-diacylglycerol + a 1-acyl-sn-glycero-3-phosphocholine. The catalysed reaction is 1-(9Z-octadecenoyl)-sn-glycerol + 1,2-di-(9Z-octadecenoyl)-sn-glycero-3-phosphocholine = 1,3-di-(9Z-octadecenoyl)-glycerol + (9Z-octadecenoyl)-sn-glycero-3-phosphocholine. The enzyme catalyses 1-hexadecanoyl-sn-glycerol + 1,2-di-(9Z-octadecenoyl)-sn-glycero-3-phosphocholine = 1-hexadecanoyl-3-(9Z)-octadecenoyl-sn-glycerol + (9Z-octadecenoyl)-sn-glycero-3-phosphocholine. It catalyses the reaction a 2-acylglycerol + a 1,2-diacyl-sn-glycero-3-phosphocholine = a 1,2-diacylglycerol + a 2-acyl-sn-glycero-3-phosphocholine. It carries out the reaction a 2-acylglycerol + a 1,2-diacyl-sn-glycero-3-phosphocholine = a 1,2-diacylglycerol + a 1-acyl-sn-glycero-3-phosphocholine. The catalysed reaction is 2-hexadecanoylglycerol + 1,2-di-(9Z-octadecenoyl)-sn-glycero-3-phosphocholine = 1-(9Z)-octadecenoyl-2-hexadecanoylglycerol + (9Z-octadecenoyl)-sn-glycero-3-phosphocholine. The enzyme catalyses 1-O-alkylglycerol + a 1,2-diacyl-sn-glycero-3-phosphocholine = 1-O-alkyl-3-acylglycerol + a 1-acyl-sn-glycero-3-phosphocholine. It catalyses the reaction 1-O-alkylglycerol + a 1,2-diacyl-sn-glycero-3-phosphocholine = 1-O-alkyl-3-acylglycerol + a 2-acyl-sn-glycero-3-phosphocholine. It carries out the reaction 1-O-hexadecylglycerol + 1,2-di-(9Z-octadecenoyl)-sn-glycero-3-phosphocholine = 1-O-hexadecyl-3-(9Z)-octadecenoylglycerol + (9Z-octadecenoyl)-sn-glycero-3-phosphocholine. The catalysed reaction is 1-O-alkyl-2-acyl-sn-glycerol + a 1,2-diacyl-sn-glycero-3-phosphocholine = 1-O-alkyl-2,3-diacyl-sn-glycerol + a 2-acyl-sn-glycero-3-phosphocholine. The enzyme catalyses 1-O-alkyl-2-acyl-sn-glycerol + a 1,2-diacyl-sn-glycero-3-phosphocholine = 1-O-alkyl-2,3-diacyl-sn-glycerol + a 1-acyl-sn-glycero-3-phosphocholine. It catalyses the reaction 1-O-hexadecyl-2-acetyl-sn-glycerol + 1,2-di-(9Z-octadecenoyl)-sn-glycero-3-phosphocholine = 1-O-hexadecyl-2-acetyl-3-(9Z)-octadecenoyl-sn-glycerol + (9Z-octadecenoyl)-sn-glycero-3-phosphocholine. It carries out the reaction 1-O-hexadecyl-2-O-methyl-sn-glycerol + 1,2-di-(9Z-octadecenoyl)-sn-glycero-3-phosphocholine = 1-O-hexadecyl-2-O-methyl-3-(9Z)-octadecenoyl-sn-glycerol + (9Z-octadecenoyl)-sn-glycero-3-phosphocholine. The catalysed reaction is a 1,2-diacyl-sn-glycero-3-phosphoethanolamine + H2O = a 1-acyl-sn-glycero-3-phosphoethanolamine + a fatty acid + H(+). The enzyme catalyses 1-acyl-2-(5Z,8Z,11Z,14Z)-eicosatetraenoyl-sn-glycero-3-phosphoethanolamine + H2O = a 1-acyl-sn-glycero-3-phosphoethanolamine + (5Z,8Z,11Z,14Z)-eicosatetraenoate + H(+). It catalyses the reaction a 1,2-diacyl-sn-glycero-3-phospho-(1'-sn-glycerol) + H2O = 1-acyl-sn-glycero-3-phospho-(1'-sn-glycerol) + a fatty acid + H(+). It carries out the reaction 1-hexadecanoyl-2-(9Z-octadecenoyl)-sn-glycero-3-phospho-(1'-sn-glycerol) + H2O = 1-hexadecanoyl-sn-glycero-3-phospho-(1'-sn-glycerol) + (9Z)-octadecenoate + H(+). The catalysed reaction is a 1,2-diacyl-sn-glycero-3-phospho-(1'-sn-glycerol) + H2O = 2-acyl-sn-glycero-3-phospho-(1'-sn-glycerol) + a fatty acid + H(+). The enzyme catalyses 1-hexadecanoyl-2-(9Z-octadecenoyl)-sn-glycero-3-phospho-(1'-sn-glycerol) + H2O = 2-(9Z-octadecenoyl)-sn-glycero-3-phospho-(1'-sn-glycerol) + hexadecanoate + H(+). Its function is as follows. Has dual calcium-independent phospholipase and O-acyltransferase activities with a potential role in glycerophospholipid homeostasis and remodeling of acyl groups of lipophilic alcohols present in acidic cellular compartments. Catalyzes hydrolysis of the ester bond of the fatty acyl group attached at sn-1 or sn-2 position of phospholipids (phospholipase A1 or A2 activity) and transfer it to the hydroxyl group at the first carbon of lipophilic alcohols (O-acyltransferase activity). Among preferred fatty acyl donors are phosphatidylcholines, phosphatidylethanolamines, phosphatidylglycerols and phosphatidylserines. Favors sn-2 over sn-1 deacylation of unsaturated fatty acyl groups of phosphatidylcholines, phosphatidylethanolamines, and phosphatidylglycerols. Among preferred fatty acyl acceptors are natural lipophilic alcohols including short-chain ceramide N-acetyl-sphingosine (C2 ceramide), alkylacylglycerols, monoacylglycerols, and acylethanolamides such as anandamide and oleoylethanolamide. Selectively hydrolyzes the sn-1 fatty acyl group of truncated oxidized phospholipids and may play a role in detoxification of reactive oxidized phospholipids during oxidative stress. Required for normal phospholipid degradation in alveolar macrophages with potential implications in the clearance of pulmonary surfactant, which is mainly composed of dipalmitoylphosphatidylcholine (1,2-dihexadecanoyl-sn-glycero-3-phosphocholine). Involved in the first step of bis(monoacylglycero)phosphate (BMP) de novo synthesis from phosphatidylglycerol (1,2-diacyl-sn-glycero-3-phospho-(1'-sn-glycerol), PG). BMP is an important player in cargo sorting and degradation, regulation of cellular cholesterol levels and intercellular communication. At neutral pH, hydrolyzes the sn-1 fatty acyl group of the lysophosphatidylcholines. The chain is Lysosomal phospholipase A and acyltransferase (PLA2G15) from Canis lupus familiaris (Dog).